Here is a 531-residue protein sequence, read N- to C-terminus: 2,3-bisphosphoglycerate-independent phosphoglycerate mutase (531 aa).

Mn(2+) is bound by residues Asp13 and Ser63. Catalysis depends on Ser63, which acts as the Phosphoserine intermediate. Substrate-binding positions include His124, Arg154–Asp155, Arg187, Arg193, Arg261–Arg264, and Lys342. Residues Asp420, His424, Asp462, His463, and His480 each coordinate Mn(2+).

This sequence belongs to the BPG-independent phosphoglycerate mutase family. As to quaternary structure, monomer. The cofactor is Mn(2+).

The catalysed reaction is (2R)-2-phosphoglycerate = (2R)-3-phosphoglycerate. It functions in the pathway carbohydrate degradation; glycolysis; pyruvate from D-glyceraldehyde 3-phosphate: step 3/5. Catalyzes the interconversion of 2-phosphoglycerate and 3-phosphoglycerate. This chain is 2,3-bisphosphoglycerate-independent phosphoglycerate mutase, found in Mycoplasma mycoides subsp. mycoides SC (strain CCUG 32753 / NCTC 10114 / PG1).